The sequence spans 357 residues: uncharacterized protein (357 aa).

Residues 27–196 (LVCEGGGQRG…SDAIPVKEAA (170 aa)) enclose the PNPLA domain. Residues 31-36 (GGGQRG) carry the GXGXXG motif. The GXSXG signature appears at 59-63 (GTSAG). The active-site Nucleophile is S61. D183 acts as the Proton acceptor in catalysis. The short motif at 183–185 (DGG) is the DGA/G element.

Probable lipid hydrolase. This is an uncharacterized protein from Escherichia coli (strain K12).